A 545-amino-acid chain; its full sequence is Membrane protein insertase YidC (545 aa).

Helical transmembrane passes span 10 to 30, 319 to 339, 341 to 361, 407 to 427, 467 to 487, and 502 to 522; these read AIYLSLFFIGIFMIIDDIFFS, LLYFIQVPMQLIMQIFYNVIP, WGLSIMFLTIVVRILIFPLTF, LGGCFPILLQLPVFFALYGLV, ILPFIMMVTQLISTIISSNVS, and MPIMFFFILYDMPSGLLIYWI.

This sequence belongs to the OXA1/ALB3/YidC family. Type 1 subfamily. Interacts with the Sec translocase complex via SecD. Specifically interacts with transmembrane segments of nascent integral membrane proteins during membrane integration.

The protein resides in the cell inner membrane. Required for the insertion and/or proper folding and/or complex formation of integral membrane proteins into the membrane. Involved in integration of membrane proteins that insert both dependently and independently of the Sec translocase complex, as well as at least some lipoproteins. Aids folding of multispanning membrane proteins. The chain is Membrane protein insertase YidC from Borrelia hermsii (strain HS1 / DAH).